The chain runs to 147 residues: UPF0306 protein YhbP (147 aa).

It belongs to the UPF0306 family.

The protein is UPF0306 protein YhbP of Salmonella arizonae (strain ATCC BAA-731 / CDC346-86 / RSK2980).